The chain runs to 541 residues: Chaperonin GroEL 2 (541 aa).

ATP contacts are provided by residues Thr29–Pro32, Asp86–Thr90, Gly413, Asn478–Ala480, and Asp494.

The protein belongs to the chaperonin (HSP60) family. Forms a cylinder of 14 subunits composed of two heptameric rings stacked back-to-back. Interacts with the co-chaperonin GroES.

The protein resides in the cytoplasm. The enzyme catalyses ATP + H2O + a folded polypeptide = ADP + phosphate + an unfolded polypeptide.. Functionally, together with its co-chaperonin GroES, plays an essential role in assisting protein folding. The GroEL-GroES system forms a nano-cage that allows encapsulation of the non-native substrate proteins and provides a physical environment optimized to promote and accelerate protein folding. The chain is Chaperonin GroEL 2 from Corynebacterium jeikeium (strain K411).